A 201-amino-acid polypeptide reads, in one-letter code: 3-isopropylmalate dehydratase small subunit (201 aa).

The protein belongs to the LeuD family. LeuD type 1 subfamily. Heterodimer of LeuC and LeuD.

The catalysed reaction is (2R,3S)-3-isopropylmalate = (2S)-2-isopropylmalate. It participates in amino-acid biosynthesis; L-leucine biosynthesis; L-leucine from 3-methyl-2-oxobutanoate: step 2/4. Functionally, catalyzes the isomerization between 2-isopropylmalate and 3-isopropylmalate, via the formation of 2-isopropylmaleate. The polypeptide is 3-isopropylmalate dehydratase small subunit (Klebsiella pneumoniae (strain 342)).